The chain runs to 460 residues: A-type ATP synthase subunit B (460 aa).

It belongs to the ATPase alpha/beta chains family. As to quaternary structure, has multiple subunits with at least A(3), B(3), C, D, E, F, H, I and proteolipid K(x).

It localises to the cell membrane. Functionally, component of the A-type ATP synthase that produces ATP from ADP in the presence of a proton gradient across the membrane. The B chain is a regulatory subunit. The polypeptide is A-type ATP synthase subunit B (Methanosarcina barkeri (strain Fusaro / DSM 804)).